Here is a 602-residue protein sequence, read N- to C-terminus: Sodium- and chloride-dependent GABA transporter 2 (602 aa).

Residues 1 to 40 lie on the Cytoplasmic side of the membrane; it reads MDSRVSGTTSNGETKPVCPGLEKAAEDGALQREQWSNKME. 3 consecutive transmembrane segments (helical) span residues 41–61, 68–88, and 121–141; these read FLLSVAGEIIGLGNVWRFPYL, GAFFIPYLIFLFTCGIPVFLL, and IVTLLNIYYIIVLAWALFYLF. Over 142-206 the chain is Extracellular; it reads SSFTIDLPWG…GIQHLGALRW (65 aa). C153 and C162 are disulfide-bonded. N-linked (GlcNAc...) asparagine glycans are attached at residues N169 and N173. 2 helical membrane-spanning segments follow: residues 207-227 and 233-253; these read ELALCLLLAWVVCYFCIWKGV and VVYFTATFPYLMLVVLLIRGV. N-linked (GlcNAc...) asparagine glycosylation occurs at N269. Helical transmembrane passes span 282-302, 319-339, 366-386, 418-438, 453-473, 490-510, and 528-548; these read AGTQIFFSFAICLGCLTALGS, FLNSGTSFVAGFAIFSILGFM, VVMLPFSPLWACCFFFMVVLL, VLILGVSVTSFLVGLVMLTEG, GMCLLFVAIFESFCVAWAYGA, PLIKYCWLFLTPAVCTATFLF, and WWGDALGWLLALSSMVCIPAW. The Cytoplasmic segment spans residues 549 to 602; it reads SCYKLSTLKGSFRERVRQLLCPAKDLPQGHREGPSAPATPRTSLLILTELEPHH. Phosphothreonine is present on T587. Residue S591 is modified to Phosphoserine.

This sequence belongs to the sodium:neurotransmitter symporter (SNF) (TC 2.A.22) family. SLC6A13 subfamily.

It is found in the cell membrane. The protein resides in the basolateral cell membrane. The enzyme catalyses 4-aminobutanoate(out) + chloride(out) + 2 Na(+)(out) = 4-aminobutanoate(in) + chloride(in) + 2 Na(+)(in). It carries out the reaction taurine(out) + chloride(out) + 2 Na(+)(out) = taurine(in) + chloride(in) + 2 Na(+)(in). The catalysed reaction is beta-alanine(out) + chloride(out) + 2 Na(+)(out) = beta-alanine(in) + chloride(in) + 2 Na(+)(in). It catalyses the reaction hypotaurine(out) + chloride(out) + 2 Na(+)(out) = hypotaurine(in) + chloride(in) + 2 Na(+)(in). Functionally, mediates sodium- and chloride-dependent transport of gamma-aminobutyric acid (GABA). Can also mediate transport of beta-alanine, taurine and hypotaurine. This chain is Sodium- and chloride-dependent GABA transporter 2 (SLC6A13), found in Bos taurus (Bovine).